We begin with the raw amino-acid sequence, 343 residues long: Anthranilate phosphoribosyltransferase (343 aa).

Residues Gly79, 82–83 (GD), Thr87, 89–92 (NVST), 106–114 (KHGNRAASS), and Ser118 each bind 5-phospho-alpha-D-ribose 1-diphosphate. Gly79 provides a ligand contact to anthranilate. Ser91 is a binding site for Mg(2+). Asn109 is a binding site for anthranilate. Position 164 (Arg164) interacts with anthranilate. Mg(2+) contacts are provided by Asp223 and Glu224.

It belongs to the anthranilate phosphoribosyltransferase family. Homodimer. Mg(2+) serves as cofactor.

It catalyses the reaction N-(5-phospho-beta-D-ribosyl)anthranilate + diphosphate = 5-phospho-alpha-D-ribose 1-diphosphate + anthranilate. It participates in amino-acid biosynthesis; L-tryptophan biosynthesis; L-tryptophan from chorismate: step 2/5. Functionally, catalyzes the transfer of the phosphoribosyl group of 5-phosphorylribose-1-pyrophosphate (PRPP) to anthranilate to yield N-(5'-phosphoribosyl)-anthranilate (PRA). This Metallosphaera sedula (strain ATCC 51363 / DSM 5348 / JCM 9185 / NBRC 15509 / TH2) protein is Anthranilate phosphoribosyltransferase.